The chain runs to 346 residues: tRNA N6-adenosine threonylcarbamoyltransferase (346 aa).

Residues His111 and His115 each coordinate Fe cation. Residues 134 to 138 (LVSGG), Asp167, Gly180, and Asn279 contribute to the substrate site. A Fe cation-binding site is contributed by Asp307.

It belongs to the KAE1 / TsaD family. It depends on Fe(2+) as a cofactor.

It localises to the cytoplasm. The catalysed reaction is L-threonylcarbamoyladenylate + adenosine(37) in tRNA = N(6)-L-threonylcarbamoyladenosine(37) in tRNA + AMP + H(+). Functionally, required for the formation of a threonylcarbamoyl group on adenosine at position 37 (t(6)A37) in tRNAs that read codons beginning with adenine. Is involved in the transfer of the threonylcarbamoyl moiety of threonylcarbamoyl-AMP (TC-AMP) to the N6 group of A37, together with TsaE and TsaB. TsaD likely plays a direct catalytic role in this reaction. In Burkholderia ambifaria (strain ATCC BAA-244 / DSM 16087 / CCUG 44356 / LMG 19182 / AMMD) (Burkholderia cepacia (strain AMMD)), this protein is tRNA N6-adenosine threonylcarbamoyltransferase.